We begin with the raw amino-acid sequence, 313 residues long: Sororin-like protein 1 (313 aa).

An FGF motif motif is present at residues 44–46 (FGF). The tract at residues 105–287 (ADENQQSVPT…NDNLKELTPG (183 aa)) is disordered. A compositionally biased stretch (polar residues) spans 107 to 118 (ENQQSVPTVSIA). The segment covering 123-134 (PELPPSSSPLLP) has biased composition (pro residues). Over residues 135–154 (PNGSESSSPIPLSLLSTSSL) the composition is skewed to low complexity. A compositionally biased stretch (polar residues) spans 155-170 (QQRKITPSNLSNTSKP). The span at 184–196 (HGHHLTRLRKKRR) shows a compositional bias: basic residues. Basic and acidic residues predominate over residues 249-264 (EKKILKTYHSQDKDTA). The C-terminal Sororin domain stretch occupies residues 288–310 (KKEYLKSIKKYFQDVDDYQLHVV).

Belongs to the sororin family. As to quaternary structure, interacts with Pds5 and Psm3.

It localises to the nucleus. In terms of biological role, regulator of sister chromatid cohesion in mitosis stabilizing cohesin complex association with chromatin. Antagonizes the action of wpl1 which stimulates cohesin dissociation from chromatin. Cohesion ensures that chromosome partitioning is accurate in dividing cells and may play an important role in DNA repair. In Schizosaccharomyces pombe (strain 972 / ATCC 24843) (Fission yeast), this protein is Sororin-like protein 1.